The primary structure comprises 499 residues: Aspartyl/glutamyl-tRNA(Asn/Gln) amidotransferase subunit B (499 aa).

Belongs to the GatB/GatE family. GatB subfamily. As to quaternary structure, heterotrimer of A, B and C subunits.

The enzyme catalyses L-glutamyl-tRNA(Gln) + L-glutamine + ATP + H2O = L-glutaminyl-tRNA(Gln) + L-glutamate + ADP + phosphate + H(+). The catalysed reaction is L-aspartyl-tRNA(Asn) + L-glutamine + ATP + H2O = L-asparaginyl-tRNA(Asn) + L-glutamate + ADP + phosphate + 2 H(+). In terms of biological role, allows the formation of correctly charged Asn-tRNA(Asn) or Gln-tRNA(Gln) through the transamidation of misacylated Asp-tRNA(Asn) or Glu-tRNA(Gln) in organisms which lack either or both of asparaginyl-tRNA or glutaminyl-tRNA synthetases. The reaction takes place in the presence of glutamine and ATP through an activated phospho-Asp-tRNA(Asn) or phospho-Glu-tRNA(Gln). This Bifidobacterium longum (strain DJO10A) protein is Aspartyl/glutamyl-tRNA(Asn/Gln) amidotransferase subunit B.